The primary structure comprises 467 residues: 3-isopropylmalate dehydratase large subunit (467 aa).

C347, C407, and C410 together coordinate [4Fe-4S] cluster.

Belongs to the aconitase/IPM isomerase family. LeuC type 1 subfamily. Heterodimer of LeuC and LeuD. It depends on [4Fe-4S] cluster as a cofactor.

It catalyses the reaction (2R,3S)-3-isopropylmalate = (2S)-2-isopropylmalate. Its pathway is amino-acid biosynthesis; L-leucine biosynthesis; L-leucine from 3-methyl-2-oxobutanoate: step 2/4. In terms of biological role, catalyzes the isomerization between 2-isopropylmalate and 3-isopropylmalate, via the formation of 2-isopropylmaleate. The sequence is that of 3-isopropylmalate dehydratase large subunit from Nostoc sp. (strain PCC 7120 / SAG 25.82 / UTEX 2576).